We begin with the raw amino-acid sequence, 94 residues long: uncharacterized protein (94 aa).

An N-terminal signal peptide occupies residues 1–25; sequence MRAAIAVLFIALVGLATYHLVMSQA.

This is an uncharacterized protein from Archaeoglobus fulgidus (strain ATCC 49558 / DSM 4304 / JCM 9628 / NBRC 100126 / VC-16).